Reading from the N-terminus, the 43-residue chain is Bacteriocin mundticin (43 aa).

A disulfide bridge connects residues cysteine 9 and cysteine 14.

Its function is as follows. This bacteriocin inhibits the growth of several Gram-positive bacteria, especially pathogenic L.monocytogenes and C.botulinum but has no effect on the growth of a number of yeasts and Gram-negative bacteria. The protein is Bacteriocin mundticin of Enterococcus mundtii.